The following is a 642-amino-acid chain: MSNSVNISVETTCENQIREIGYDGTELYQPPPTLSESLAKCAARIDFSKTSLDDLKKEEKSAAAAADEDKDATQFQESLWPWDAVRNKLKDALTEICVLSDVISIAKDKRYLVLDPLLEEADDTKPIVQVYSRKKAISQAAQVLLSGAERLRNAHSEQRNRNVSDFHIELLRLRQNWRLKKVSNAIIGDLSYRTAGSKFGMSGTFEVTKAEETGDEDTASSSNSSSSVSGNNGMQLKASSALRVIVPAELQGVAYIKVITQKDQEDLCTAQLNLMGHGPNITAQVGVWQKTLEFAQNVLFCKELFAQLAREAIQLQAPIPHVVIGNQIRATLLPNIQLIISLCHSTTFDSSQPAPINDHDHVLEHSLHQLLREVHYKNSHHPFPHPASAPLGPTKKRMLAGPMAADRETLLDMTKSQTILEQIIAQAQHIFMRKRTQYVLDTLARDVKDPQIVSHWNAMNSPTMSCVKINIVTHGYDAIGRTSLVIHVKERSLKCICRDGRVMRLSYEPQELRDLILCQINSHQISCLISLARCMSWTVLSNSNHLGIGKVEPLGNASSCLLASPNSDRMIAVQIRCDPQIDVKVYIARSPRQDFFPSPLVPEKLWENLGGTFKEVRFDKIEGKSFLNKMEFLMASLTSNTA.

Residues 210–232 (AEETGDEDTASSSNSSSSVSGNN) form a disordered region. Residues 220 to 232 (SSSNSSSSVSGNN) are compositionally biased toward low complexity.

This sequence belongs to the Mediator complex subunit 17 family. In terms of assembly, component of the Mediator complex, which includes at least CDK8, MED4, MED6, MED11, MED14, MED17, MED18, MED20, MED21, MED22, MED27, MED28, MED30 and MED31. Interacts with Hsf.

It is found in the nucleus. The protein localises to the chromosome. Its function is as follows. Component of the Mediator complex, a coactivator involved in the regulated transcription of nearly all RNA polymerase II-dependent genes. Mediator functions as a bridge to convey information from gene-specific regulatory proteins to the basal RNA polymerase II transcription machinery. Mediator is recruited to promoters by direct interactions with regulatory proteins and serves as a scaffold for the assembly of a functional preinitiation complex with RNA polymerase II and the general transcription factors. Required for activated transcription of the MtnA, MtnB and MtnD genes. Negatively regulates sex comb development. The sequence is that of Mediator of RNA polymerase II transcription subunit 17 (MED17) from Drosophila melanogaster (Fruit fly).